The sequence spans 39 residues: Cecropin (39 aa).

It localises to the secreted. Functionally, antibacterial peptide active against Gram-negative bacterium E.coli. Has no activity against Gram-positive bacterium M.luteus. Weakly active against M.luteus. The chain is Cecropin from Calliphora vicina (Blue blowfly).